Consider the following 647-residue polypeptide: Exoribonuclease 2 (647 aa).

An RNB domain is found at 190–519 (REDLTSLPFV…NHRLLKAIIK (330 aa)). The S1 motif domain occupies 564-646 (EQRFSAEVID…ETRSIVARPV (83 aa)).

This sequence belongs to the RNR ribonuclease family. RNase II subfamily.

The protein localises to the cytoplasm. The catalysed reaction is Exonucleolytic cleavage in the 3'- to 5'-direction to yield nucleoside 5'-phosphates.. In terms of biological role, involved in mRNA degradation. Hydrolyzes single-stranded polyribonucleotides processively in the 3' to 5' direction. The protein is Exoribonuclease 2 of Erwinia tasmaniensis (strain DSM 17950 / CFBP 7177 / CIP 109463 / NCPPB 4357 / Et1/99).